The primary structure comprises 436 residues: Adenylosuccinate synthetase (436 aa).

GTP contacts are provided by residues 12-18 (GDEGKGK) and 40-42 (GHT). Catalysis depends on aspartate 13, which acts as the Proton acceptor. Mg(2+) contacts are provided by aspartate 13 and glycine 40. IMP-binding positions include 13–16 (DEGK), 38–41 (NAGH), threonine 128, arginine 142, glutamine 223, threonine 238, and arginine 302. Histidine 41 functions as the Proton donor in the catalytic mechanism. Substrate is bound at residue 298-304 (TTTGRRR). Residues arginine 304, 330–332 (KLD), and 412–414 (SLG) each bind GTP.

This sequence belongs to the adenylosuccinate synthetase family. Homodimer. It depends on Mg(2+) as a cofactor.

It is found in the cytoplasm. The enzyme catalyses IMP + L-aspartate + GTP = N(6)-(1,2-dicarboxyethyl)-AMP + GDP + phosphate + 2 H(+). The protein operates within purine metabolism; AMP biosynthesis via de novo pathway; AMP from IMP: step 1/2. Plays an important role in the de novo pathway of purine nucleotide biosynthesis. Catalyzes the first committed step in the biosynthesis of AMP from IMP. The polypeptide is Adenylosuccinate synthetase (Prochlorococcus marinus (strain MIT 9312)).